The primary structure comprises 203 residues: MKSRNGPLRVGIGGPVGSGKTALTEKLCKAMRDDYSVAVVTNDIYTTEDAEALVRMQALPSDRIVGVETGGCPHTAIREDATINLQAIAGLNERIPDLDVVFIESGGDNLAATFSPDLADITIYVISVCQGEEIPRKGGPGITRSDLLVINKKDLAPYVGADLEVMDRDATRMRASRPFVFSDMKRGDGVSSIVNFLREQGGL.

14-21 (GPVGSGKT) provides a ligand contact to GTP.

This sequence belongs to the SIMIBI class G3E GTPase family. UreG subfamily. In terms of assembly, homodimer. UreD, UreF and UreG form a complex that acts as a GTP-hydrolysis-dependent molecular chaperone, activating the urease apoprotein by helping to assemble the nickel containing metallocenter of UreC. The UreE protein probably delivers the nickel.

Its subcellular location is the cytoplasm. Its function is as follows. Facilitates the functional incorporation of the urease nickel metallocenter. This process requires GTP hydrolysis, probably effectuated by UreG. The protein is Urease accessory protein UreG of Rhizobium etli (strain ATCC 51251 / DSM 11541 / JCM 21823 / NBRC 15573 / CFN 42).